Reading from the N-terminus, the 2531-residue chain is Probable polyketide synthase 26 (2531 aa).

The Ketosynthase family 3 (KS3) domain maps to Gln-10–Glu-433. Active-site for beta-ketoacyl synthase activity residues include Cys-174, His-316, and His-356. The interval Gly-620–Tyr-653 is acyl/malonyl transferase. Ser-630 serves as the catalytic For acyl/malonyl transferase activity. Residues Met-915–Asp-1036 form an N-terminal hotdog fold region. The 292-residue stretch at Met-915–Pro-1206 folds into the PKS/mFAS DH domain. His-948 acts as the Proton acceptor; for dehydratase activity in catalysis. The interval Asn-1055–Pro-1206 is C-terminal hotdog fold. Asp-1117 serves as the catalytic Proton donor; for dehydratase activity. In terms of domain architecture, Carrier spans Ala-2431–Tyr-2509. Residue Ser-2468 is modified to O-(pantetheine 4'-phosphoryl)serine.

Requires pantetheine 4'-phosphate as cofactor.

Functionally, probable polyketide synthase. The polypeptide is Probable polyketide synthase 26 (pks26) (Dictyostelium discoideum (Social amoeba)).